The primary structure comprises 737 residues: Photosystem I P700 chlorophyll a apoprotein A2 (737 aa).

The next 8 membrane-spanning stretches (helical) occupy residues 46 to 69 (IFAS…FHVA), 135 to 158 (LYNG…LHLQ), 175 to 199 (LNHH…HVAI), 273 to 291 (IAHH…GHMY), 330 to 353 (LHFQ…QHMY), 369 to 395 (AALY…IFLV), 417 to 439 (AIIS…LYVH), and 520 to 538 (FLVH…LILV). [4Fe-4S] cluster-binding residues include Cys562 and Cys571. 2 helical membrane-spanning segments follow: residues 578–599 (AFYL…YWHW) and 646–668 (LSVW…MFLI). The chlorophyll a site is built by His657, Met665, and Tyr673. Position 674 (Trp674) interacts with phylloquinone. Residues 710-730 (LVGLAHFAVGYIVTYAAFLIA) form a helical membrane-spanning segment.

Belongs to the PsaA/PsaB family. As to quaternary structure, the PsaA/B heterodimer binds the P700 chlorophyll special pair and subsequent electron acceptors. PSI consists of a core antenna complex that captures photons, and an electron transfer chain that converts photonic excitation into a charge separation. The eukaryotic PSI reaction center is composed of at least 11 subunits. Requires P700 is a chlorophyll a/chlorophyll a' dimer, A0 is one or more chlorophyll a, A1 is one or both phylloquinones and FX is a shared 4Fe-4S iron-sulfur center. as cofactor.

It is found in the plastid. The protein resides in the cyanelle thylakoid membrane. The enzyme catalyses reduced [plastocyanin] + hnu + oxidized [2Fe-2S]-[ferredoxin] = oxidized [plastocyanin] + reduced [2Fe-2S]-[ferredoxin]. In terms of biological role, psaA and PsaB bind P700, the primary electron donor of photosystem I (PSI), as well as the electron acceptors A0, A1 and FX. PSI is a cytochrome c6-ferredoxin oxidoreductase, converting photonic excitation into a charge separation, which transfers an electron from the donor P700 chlorophyll pair to the spectroscopically characterized acceptors A0, A1, FX, FA and FB in turn. Oxidized P700 is reduced on the lumenal side of the thylakoid membrane by cytochrome c6. The protein is Photosystem I P700 chlorophyll a apoprotein A2 of Cyanophora paradoxa.